A 101-amino-acid polypeptide reads, in one-letter code: Phosphoribosyl-AMP cyclohydrolase (101 aa).

Asp71 is a Mg(2+) binding site. Cys72 serves as a coordination point for Zn(2+). Positions 73 and 75 each coordinate Mg(2+). Zn(2+) contacts are provided by Cys88 and Cys95.

The protein belongs to the PRA-CH family. Homodimer. The cofactor is Mg(2+). Zn(2+) is required as a cofactor.

The protein resides in the cytoplasm. It catalyses the reaction 1-(5-phospho-beta-D-ribosyl)-5'-AMP + H2O = 1-(5-phospho-beta-D-ribosyl)-5-[(5-phospho-beta-D-ribosylamino)methylideneamino]imidazole-4-carboxamide. The protein operates within amino-acid biosynthesis; L-histidine biosynthesis; L-histidine from 5-phospho-alpha-D-ribose 1-diphosphate: step 3/9. In terms of biological role, catalyzes the hydrolysis of the adenine ring of phosphoribosyl-AMP. The chain is Phosphoribosyl-AMP cyclohydrolase from Bacillus cereus (strain Q1).